The following is a 478-amino-acid chain: Flotillin-like protein 1 (478 aa).

Cys-35 is lipidated: S-palmitoyl cysteine. A coiled-coil region spans residues 235–277; the sequence is ENQREAEVAEANSELAKKKAAWTMAAQVAELEAAKAVALREAE.

This sequence belongs to the band 7/mec-2 family. Flotillin subfamily. In terms of processing, may be palmitoylated. Expressed in all plant organs. Primarily expressed in vascular tissues. No change in spatial expression in root upon inoculation. Expression limited to the nodule vascular tissue.

Its subcellular location is the cell membrane. The protein localises to the membrane. The protein resides in the caveola. In terms of biological role, may act as a scaffolding protein within caveolar membranes, functionally participating in formation of caveolae or caveolae-like vesicles. May be involved in nodule formation. This Medicago truncatula (Barrel medic) protein is Flotillin-like protein 1 (FLOT1).